Consider the following 113-residue polypeptide: Ribonuclease P protein component (113 aa).

Belongs to the RnpA family. In terms of assembly, consists of a catalytic RNA component (M1 or rnpB) and a protein subunit.

The enzyme catalyses Endonucleolytic cleavage of RNA, removing 5'-extranucleotides from tRNA precursor.. RNaseP catalyzes the removal of the 5'-leader sequence from pre-tRNA to produce the mature 5'-terminus. It can also cleave other RNA substrates such as 4.5S RNA. The protein component plays an auxiliary but essential role in vivo by binding to the 5'-leader sequence and broadening the substrate specificity of the ribozyme. In Desulforamulus reducens (strain ATCC BAA-1160 / DSM 100696 / MI-1) (Desulfotomaculum reducens), this protein is Ribonuclease P protein component.